The sequence spans 103 residues: Large ribosomal subunit protein bL21 (103 aa).

It belongs to the bacterial ribosomal protein bL21 family. As to quaternary structure, part of the 50S ribosomal subunit. Contacts protein L20.

Functionally, this protein binds to 23S rRNA in the presence of protein L20. The polypeptide is Large ribosomal subunit protein bL21 (Polaromonas naphthalenivorans (strain CJ2)).